The primary structure comprises 1078 residues: Disheveled-associated activator of morphogenesis 1 (1078 aa).

At serine 34 the chain carries Phosphoserine. The region spanning 45 to 420 (LPMPPVEELD…QIVIQNDKGQ (376 aa)) is the GBD/FH3 domain. The stretch at 437–526 (RMLVNENEVK…ELSRRAVCAS (90 aa)) forms a coiled coil. Disordered stretches follow at residues 456–480 (RKEHNELQQKLEKKERECDAKTQEK) and 524–585 (CASI…PLGA). Residues 528–599 (PGGPSPGAPG…PGAPMGLALK (72 aa)) form the FH1 domain. Composition is skewed to pro residues over residues 530 to 539 (GPSPGAPGGP) and 548 to 585 (LLPPPPPPPLPGGMLPPPPPPLPPGGPPPPPGPPPLGA). An FH2 domain is found at 600–1009 (KKSIPQPTNA…EERRARMEAQ (410 aa)). The interval 693 to 702 (AQNCNILLSR) is actin-binding. The segment covering 987–1027 (KQENENMRKKKEEEERRARMEAQLKEQRERERKMRKAKENS) has biased composition (basic and acidic residues). Disordered stretches follow at residues 987–1034 (KQEN…GEFD) and 1055–1078 (RNRKRITNQMTDSSRERPITKLNF). A phosphoserine mark is found at serine 1027 and serine 1030. A DAD domain is found at 1027–1058 (SEESGEFDDLVSALRSGEVFDKDLSKLKRNRK). Positions 1067-1078 (SSRERPITKLNF) are enriched in basic and acidic residues.

Belongs to the formin homology family. In terms of assembly, homodimer. Interacts with CIP4, FNBP1 and FNBP1L. Interacts with the SH3 domains of Abl, BTK, endophilin, spectrin and SRC. Binds specifically to GTP-bound CDC42 and RHOA. Interacts with INTU; INTU mediates the indirect interaction between DAAM1 and NPHP4. Interacts (via coiled coil domain) with KANK1 (via coiled coil domain). In terms of tissue distribution, expressed in all tissues examined.

It is found in the cytoplasm. Its subcellular location is the cytoskeleton. It localises to the cilium basal body. In terms of biological role, binds to disheveled (Dvl) and Rho, and mediates Wnt-induced Dvl-Rho complex formation. May play a role as a scaffolding protein to recruit Rho-GDP and Rho-GEF, thereby enhancing Rho-GTP formation. Can direct nucleation and elongation of new actin filaments. Involved in building functional cilia. Involved in the organization of the subapical actin network in multiciliated epithelial cells. Together with DAAM2, required for myocardial maturation and sarcomere assembly. During cell division, may regulate RHOA activation that signals spindle orientation and chromosomal segregation. The polypeptide is Disheveled-associated activator of morphogenesis 1 (DAAM1) (Homo sapiens (Human)).